A 432-amino-acid chain; its full sequence is Serine hydroxymethyltransferase (432 aa).

(6S)-5,6,7,8-tetrahydrofolate contacts are provided by residues Leu-117 and 121–123; that span reads GHL. Position 226 is an N6-(pyridoxal phosphate)lysine (Lys-226). (6S)-5,6,7,8-tetrahydrofolate is bound at residue 366–368; sequence SPF.

It belongs to the SHMT family. As to quaternary structure, homodimer. Pyridoxal 5'-phosphate is required as a cofactor.

It localises to the cytoplasm. It carries out the reaction (6R)-5,10-methylene-5,6,7,8-tetrahydrofolate + glycine + H2O = (6S)-5,6,7,8-tetrahydrofolate + L-serine. The protein operates within one-carbon metabolism; tetrahydrofolate interconversion. It functions in the pathway amino-acid biosynthesis; glycine biosynthesis; glycine from L-serine: step 1/1. Functionally, catalyzes the reversible interconversion of serine and glycine with tetrahydrofolate (THF) serving as the one-carbon carrier. This reaction serves as the major source of one-carbon groups required for the biosynthesis of purines, thymidylate, methionine, and other important biomolecules. Also exhibits THF-independent aldolase activity toward beta-hydroxyamino acids, producing glycine and aldehydes, via a retro-aldol mechanism. The polypeptide is Serine hydroxymethyltransferase (Salinibacter ruber (strain DSM 13855 / M31)).